The following is a 1135-amino-acid chain: APC membrane recruitment protein 1 (1135 aa).

Met-1 is subject to N-acetylmethionine. Disordered stretches follow at residues 1–115 (METQ…EGTG), 156–308 (AEKF…VGDP), 339–405 (SMTD…EDDD), 447–484 (GLAPGELLTPQSDQQESAPNSDEGYYDSTTPGFEDDSG), 736–764 (NFGGSPRRAYPTYSPPEDPEEEEVEKEGN), 921–948 (LQAQQEDSDEEDEEEEEGEWSRDSPLSL), and 1007–1135 (VPES…NLAK). Positions 10–19 (QAKGAAASGS) are enriched in low complexity. The segment covering 23-35 (QTAEKGAKNKAAE) has biased composition (basic and acidic residues). Residues 36 to 50 (ATEGPTSEPSSSGPG) are compositionally biased toward low complexity. Gly residues predominate over residues 73–83 (FGGGRSKGSGK). Composition is skewed to basic and acidic residues over residues 94-107 (KTHDGLSEAAHGPE) and 196-208 (GPERVRARPHEHV). A compositionally biased stretch (pro residues) spans 238–248 (KVSPTPEPSPP). A Phosphoserine modification is found at Ser-246. Composition is skewed to basic and acidic residues over residues 253 to 262 (MACKDPEKPM) and 282 to 291 (EEPHSPETGE). A compositionally biased stretch (acidic residues) spans 373-405 (ALPDDDDEEEEEEEEVELEEEEEEVKEEEEDDD). Residues 455 to 466 (TPQSDQQESAPN) show a composition bias toward polar residues. A compositionally biased stretch (acidic residues) spans 926 to 938 (EDSDEEDEEEEEG). Positions 1058-1069 (PSCSSSSGGFSP) are enriched in low complexity. The segment covering 1119-1135 (SLATSYSSTAMNGNLAK) has biased composition (polar residues).

Belongs to the Amer family. As to quaternary structure, interacts with CTNNB1, AXIN1, LRP6, KEAP1, APC and BTRC. Interacts with SCF (SKP1-CUL1-F-box protein) E3 ubiquitin-protein ligase complexes containing BTRC and/or FBXW11. Identified in the beta-catenin destruction complex containing CTNNB1, APC, AXIN1 and AXIN2. Interacts with WT1. As to expression, detected in fetal and adult kidney, brain and spleen.

It localises to the cytoplasm. It is found in the cell membrane. The protein resides in the nucleus. In terms of biological role, regulator of the canonical Wnt signaling pathway. Acts by specifically binding phosphatidylinositol 4,5-bisphosphate (PtdIns(4,5)P2), translocating to the cell membrane and interacting with key regulators of the canonical Wnt signaling pathway, such as components of the beta-catenin destruction complex. Acts both as a positive and negative regulator of the Wnt signaling pathway, depending on the context: acts as a positive regulator by promoting LRP6 phosphorylation. Also acts as a negative regulator by acting as a scaffold protein for the beta-catenin destruction complex and promoting stabilization of Axin at the cell membrane. Promotes CTNNB1 ubiquitination and degradation. Involved in kidney development. This is APC membrane recruitment protein 1 (AMER1) from Homo sapiens (Human).